A 154-amino-acid chain; its full sequence is NADPH-dependent 7-cyano-7-deazaguanine reductase (154 aa).

Cysteine 52 functions as the Thioimide intermediate in the catalytic mechanism. Catalysis depends on aspartate 59, which acts as the Proton donor. Residues 74–76 (VES) and 93–94 (HE) each bind substrate.

The protein belongs to the GTP cyclohydrolase I family. QueF type 1 subfamily.

It is found in the cytoplasm. It carries out the reaction 7-aminomethyl-7-carbaguanine + 2 NADP(+) = 7-cyano-7-deazaguanine + 2 NADPH + 3 H(+). It participates in tRNA modification; tRNA-queuosine biosynthesis. Its function is as follows. Catalyzes the NADPH-dependent reduction of 7-cyano-7-deazaguanine (preQ0) to 7-aminomethyl-7-deazaguanine (preQ1). The sequence is that of NADPH-dependent 7-cyano-7-deazaguanine reductase from Sinorhizobium medicae (strain WSM419) (Ensifer medicae).